Reading from the N-terminus, the 1059-residue chain is MASVLKNKDEVGNILVKVQDDLRQLKKNIVQFTVQENGEILDIQALDAAIIRTENGIRRHAEDYLKTINNQVLTLPSIEEPEKKTAHPKLVTWQPPYEALPIAHPHRSPIPGPSPGEKHKTAFIMRLLHNPFHPRNKEIFQQNYGIQLPHLQKRTSIGIQRVVTGSNLGNFAIAHLQPKPPPECQDAVAELQPSAADLSSVQTPVQPKAVHVLQREDSGQNESKKVYKQEMDVRRDGMALRRSAMESAESRLLRAPPPSAASASSDNRVLTRGLARLSPINPQSLPVPAVVSKYPFTIVDGQIDPDAADFCRYKKQYCLYWGAMVEALERLQRMLLDFAVPLARVCGERLAACVQSGELNWRDGRGRCTHVEKLLSVLENRDEVWDLMCQPGQRYKGNGGHQAAAVRIQTCWRRYSARTAYLIRLRSKWAAEIIAMSLLKRAKLCHLKKSLQASRLRQLENFHSRAESLATNWKHITSAKRTIIHVPSLGYSQPRRLSLRGYDVLQNTQMGRLCDIRDENVEVIYVSPVRLGEDVLQYYTRLLGLQTAIELGDASATESHSAKRFTILMPEALEDFSTRNLCLASLLKYSPRTLKRIKNLIKGKQAYMISGVTHTDDLAVADELQIPLLGTDPVVTQLYSTKSGGKRIFSSAGVDMPPGKWDIYTLEKLYEGLAQLMAKHMEVQRWLFKIDSEVGGRGTAYVDVCHLKSRPWAQQEFIRHEPQQWRTSQSQDSVMIKFLEEVPHLLASYARLANTSCYKTWACFLEHFLKEGGVIEAFPPSQSLTCLAVDLLLEPGGDVLMLSCGDQLRGPSGLEVLGCTVPQTSICPEVLHSVCTRVGQACQQRSIMGHISLDLVTFLDPNNLEQQVWAIDLDLGYSNQLAMTQLMLMMTRGTLNCRTSKLEVPPSETSVTSRFAVMCTRLLHTNLPLVYYSTFFLMCKAQGIGYDVKARQGTVFALHDSRYRRSLGMLTISENLQGALLTFARNLSIIHQEISAPNMQGASNFKELIKDIEEVLGMTIQNQTASQEEKEITGVGSDWLSTHKLHQHKMSQCTKPILQ.

Residues 6–35 (KNKDEVGNILVKVQDDLRQLKKNIVQFTVQ) adopt a coiled-coil conformation. The tract at residues 245–267 (MESAESRLLRAPPPSAASASSDN) is disordered. Positions 401–430 (HQAAAVRIQTCWRRYSARTAYLIRLRSKWA) constitute an IQ domain.

This Danio rerio (Zebrafish) protein is IQ motif-containing protein H (iqch).